The primary structure comprises 181 residues: MEPEIKIVNVVVSTQIGTDIDLEYAADILDNAEYEPEQFPGLVCRLSDPKVALLIFRSGKLNCTGAKSKDDAVIAINKIIKELQEAGMDIIDNPEVNVQNMVATTELGMEPNLDDISTLECTEYEPEQFPGLVYRLSDPKVVVLIFGSGKVVITGLKRIDDAYVAFNKILTTLKELEEELY.

Tandem repeats lie at residues 7–83 (IVNV…IKEL) and 98–173 (VQNM…LTTL).

It belongs to the TBP family.

General factor that plays a role in the activation of archaeal genes transcribed by RNA polymerase. Binds specifically to the TATA box promoter element which lies close to the position of transcription initiation. This chain is TATA-box-binding protein, found in Methanococcus maripaludis (strain C7 / ATCC BAA-1331).